The chain runs to 449 residues: Tubulin alpha-1 chain (449 aa).

Glutamine 11, glutamate 71, serine 140, glycine 144, threonine 145, threonine 179, asparagine 206, and asparagine 228 together coordinate GTP. Residue glutamate 71 participates in Mg(2+) binding. Residue glutamate 254 is part of the active site.

Belongs to the tubulin family. In terms of assembly, dimer of alpha and beta chains. A typical microtubule is a hollow water-filled tube with an outer diameter of 25 nm and an inner diameter of 15 nM. Alpha-beta heterodimers associate head-to-tail to form protofilaments running lengthwise along the microtubule wall with the beta-tubulin subunit facing the microtubule plus end conferring a structural polarity. Microtubules usually have 13 protofilaments but different protofilament numbers can be found in some organisms and specialized cells. Mg(2+) serves as cofactor.

It localises to the cytoplasm. It is found in the cytoskeleton. The catalysed reaction is GTP + H2O = GDP + phosphate + H(+). Its function is as follows. Tubulin is the major constituent of microtubules, a cylinder consisting of laterally associated linear protofilaments composed of alpha- and beta-tubulin heterodimers. Microtubules grow by the addition of GTP-tubulin dimers to the microtubule end, where a stabilizing cap forms. Below the cap, tubulin dimers are in GDP-bound state, owing to GTPase activity of alpha-tubulin. The chain is Tubulin alpha-1 chain (tubA) from Emericella nidulans (strain FGSC A4 / ATCC 38163 / CBS 112.46 / NRRL 194 / M139) (Aspergillus nidulans).